A 177-amino-acid chain; its full sequence is Peptide deformylase 2 (177 aa).

Residues cysteine 99 and histidine 141 each coordinate Fe cation. Glutamate 142 is a catalytic residue. Residue histidine 145 coordinates Fe cation.

It belongs to the polypeptide deformylase family. Fe(2+) is required as a cofactor.

It carries out the reaction N-terminal N-formyl-L-methionyl-[peptide] + H2O = N-terminal L-methionyl-[peptide] + formate. In terms of biological role, removes the formyl group from the N-terminal Met of newly synthesized proteins. Requires at least a dipeptide for an efficient rate of reaction. N-terminal L-methionine is a prerequisite for activity but the enzyme has broad specificity at other positions. The polypeptide is Peptide deformylase 2 (Ralstonia nicotianae (strain ATCC BAA-1114 / GMI1000) (Ralstonia solanacearum)).